The following is a 637-amino-acid chain: MEGGCGSQWKAAGFLFCVMVFASAERPVFTNHFLVELHKDGEEEARQVAAEHGFGVRKLPFAEGLYHFYHNGLAKAKRRRSLHHKRQLERDPRIKMALQQEGFDRKKRGYRDINEIDINMNDPLFTKQWYLFNTGQADGTPGLDLNVAEAWELGYTGKGVTIGIMDDGIDYLHPDLAYNYNADASYDFSSNDPYPYPRYTDDWFNSHGTRCAGEVSAAASNNICGVGVAYNSKVAGIRMLDQPFMTDIIEASSISHMPQLIDIYSASWGPTDNGKTVDGPRELTLQAMADGVNKGRGGKGSIYVWASGDGGSYDDCNCDGYASSMWTISINSAINDGRTALYDESCSSTLASTFSNGRKRNPEAGVATTDLYGNCTLRHSGTSAAAPEAAGVFALALEANLDLTWRDMQHLTVLTSKRNQLHDEVHQWRRNGVGLEFNHLFGYGVLDAGAMVKMAKDWKTVPERFHCVGGSVQNPEKIPPTGKLVLTLKTNACEGKENFVRYLEHVQAVITVNATRRGDLNINMTSPMGTKSILLSRRPRDDDSKVGFDKWPFMTTHTWGEDARGTWTLELGFVGSAPQKGLLKEWTLMLHGTQSAPYIDQVVRDYQSKLAMSKKQELEEELDEAVERSLQSILRKN.

A signal peptide spans 1–24 (MEGGCGSQWKAAGFLFCVMVFASA). A propeptide spanning residues 25 to 108 (ERPVFTNHFL…QQEGFDRKKR (84 aa)) is cleaved from the precursor. A Peptidase S8 domain is found at 128–452 (QWYLFNTGQA…YGVLDAGAMV (325 aa)). Residues D166 and H207 each act as charge relay system in the active site. 2 disulfides stabilise this stretch: C224-C375 and C316-C346. N374 is a glycosylation site (N-linked (GlcNAc...) asparagine). S383 (charge relay system) is an active-site residue. The P/Homo B domain maps to 460–596 (TVPERFHCVG…TLMLHGTQSA (137 aa)). A disulfide bond links C467 and C493. N513 and N523 each carry an N-linked (GlcNAc...) asparagine glycan.

It belongs to the peptidase S8 family. Furin subfamily.

Its subcellular location is the cytoplasmic vesicle. It localises to the secretory vesicle. The protein resides in the secreted. It carries out the reaction Release of protein hormones and neuropeptides from their precursors, generally by hydrolysis of -Lys-Arg-|- bonds.. Serine endopeptidase which is involved in the processing of hormone and other protein precursors at sites comprised of pairs of basic amino acid residues. Responsible for the release of glucagon from proglucagon in pancreatic A cells. In Mus musculus (Mouse), this protein is Neuroendocrine convertase 2 (Pcsk2).